The primary structure comprises 132 residues: ATP synthase epsilon chain (132 aa).

Belongs to the ATPase epsilon chain family. In terms of assembly, F-type ATPases have 2 components, CF(1) - the catalytic core - and CF(0) - the membrane proton channel. CF(1) has five subunits: alpha(3), beta(3), gamma(1), delta(1), epsilon(1). CF(0) has three main subunits: a, b and c.

It localises to the cell membrane. In terms of biological role, produces ATP from ADP in the presence of a proton gradient across the membrane. This is ATP synthase epsilon chain (atpC) from Bacillus caldotenax.